A 475-amino-acid polypeptide reads, in one-letter code: Aspartyl/glutamyl-tRNA(Asn/Gln) amidotransferase subunit B (475 aa).

Belongs to the GatB/GatE family. GatB subfamily. As to quaternary structure, heterotrimer of A, B and C subunits.

The enzyme catalyses L-glutamyl-tRNA(Gln) + L-glutamine + ATP + H2O = L-glutaminyl-tRNA(Gln) + L-glutamate + ADP + phosphate + H(+). It catalyses the reaction L-aspartyl-tRNA(Asn) + L-glutamine + ATP + H2O = L-asparaginyl-tRNA(Asn) + L-glutamate + ADP + phosphate + 2 H(+). Its function is as follows. Allows the formation of correctly charged Asn-tRNA(Asn) or Gln-tRNA(Gln) through the transamidation of misacylated Asp-tRNA(Asn) or Glu-tRNA(Gln) in organisms which lack either or both of asparaginyl-tRNA or glutaminyl-tRNA synthetases. The reaction takes place in the presence of glutamine and ATP through an activated phospho-Asp-tRNA(Asn) or phospho-Glu-tRNA(Gln). The chain is Aspartyl/glutamyl-tRNA(Asn/Gln) amidotransferase subunit B from Bacillus cereus (strain G9842).